The primary structure comprises 273 residues: Outer surface protein A (273 aa).

A signal peptide spans methionine 1–alanine 16. Residue cysteine 17 is the site of N-palmitoyl cysteine attachment. The S-diacylglycerol cysteine moiety is linked to residue cysteine 17.

It belongs to the OspA lipoprotein family.

It is found in the cell outer membrane. It localises to the cell surface. The sequence is that of Outer surface protein A from Borreliella burgdorferi (strain N40) (Borrelia burgdorferi).